A 121-amino-acid polypeptide reads, in one-letter code: Ribosome-binding factor A (121 aa).

The protein belongs to the RbfA family. As to quaternary structure, monomer. Binds 30S ribosomal subunits, but not 50S ribosomal subunits or 70S ribosomes.

Its subcellular location is the cytoplasm. In terms of biological role, one of several proteins that assist in the late maturation steps of the functional core of the 30S ribosomal subunit. Associates with free 30S ribosomal subunits (but not with 30S subunits that are part of 70S ribosomes or polysomes). Required for efficient processing of 16S rRNA. May interact with the 5'-terminal helix region of 16S rRNA. The polypeptide is Ribosome-binding factor A (Clostridium acetobutylicum (strain ATCC 824 / DSM 792 / JCM 1419 / IAM 19013 / LMG 5710 / NBRC 13948 / NRRL B-527 / VKM B-1787 / 2291 / W)).